Consider the following 60-residue polypeptide: 5-hydroxytryptamine receptor 2B (60 aa).

The Extracellular segment spans residues Val1 to Pro4. Residues Ala5 to Val26 traverse the membrane as a helical segment. Ergotamine is bound by residues Asp10 and Thr15. Positions Asp27–Tyr29 match the DRY motif; important for ligand-induced conformation changes motif. At Asp27 to Thr46 the chain is on the cytoplasmic side. A helical transmembrane segment spans residues Ala47–Gly60.

Belongs to the G-protein coupled receptor 1 family. Interacts (via C-terminus) with MPDZ. Detected in aorta, renal artery, jugular vein, vena cava and femoral vein.

It localises to the cell membrane. The protein resides in the synapse. The protein localises to the synaptosome. Its function is as follows. G-protein coupled receptor for 5-hydroxytryptamine (serotonin). Also functions as a receptor for various ergot alkaloid derivatives and psychoactive substances. Ligand binding causes a conformation change that triggers signaling via guanine nucleotide-binding proteins (G proteins) and modulates the activity of downstream effectors. HTR2B is coupled to G(q)/G(11) G alpha proteins and activates phospholipase C-beta, releasing diacylglycerol (DAG) and inositol 1,4,5-trisphosphate (IP3) second messengers that modulate the activity of phosphatidylinositol 3-kinase and promote the release of Ca(2+) ions from intracellular stores, respectively. Beta-arrestin family members inhibit signaling via G proteins and mediate activation of alternative signaling pathways. Plays a role in the regulation of dopamine and 5-hydroxytryptamine release, 5-hydroxytryptamine uptake and in the regulation of extracellular dopamine and 5-hydroxytryptamine levels, and thereby affects neural activity. May play a role in the perception of pain. Plays a role in the regulation of behavior, including impulsive behavior. Required for normal proliferation of embryonic cardiac myocytes and normal heart development. Protects cardiomyocytes against apoptosis. Plays a role in the adaptation of pulmonary arteries to chronic hypoxia. Plays a role in vasoconstriction. Required for normal osteoblast function and proliferation, and for maintaining normal bone density. Required for normal proliferation of the interstitial cells of Cajal in the intestine. This chain is 5-hydroxytryptamine receptor 2B (HTR2B), found in Sus scrofa (Pig).